The primary structure comprises 618 residues: 1-aminocyclopropane-1-carboxylate synthase-like protein 1 (618 aa).

A compositionally biased stretch (low complexity) spans 11-26; that stretch reads QGTQTPAAQTTCAPST. The interval 11-54 is disordered; sequence QGTQTPAAQTTCAPSTMSSSSRPPLETLQAQSVSADETPGSALP. Residues 27–45 are compositionally biased toward polar residues; the sequence is MSSSSRPPLETLQAQSVSA. A substrate-binding site is contributed by Glu122. At Lys340 the chain carries N6-(pyridoxal phosphate)lysine.

It belongs to the class-I pyridoxal-phosphate-dependent aminotransferase family.

The sequence is that of 1-aminocyclopropane-1-carboxylate synthase-like protein 1 (accs) from Takifugu rubripes (Japanese pufferfish).